The chain runs to 295 residues: 4-hydroxy-tetrahydrodipicolinate synthase (295 aa).

Residue threonine 45 participates in pyruvate binding. Residue tyrosine 131 is the Proton donor/acceptor of the active site. Catalysis depends on lysine 159, which acts as the Schiff-base intermediate with substrate. Valine 202 contacts pyruvate.

Belongs to the DapA family. In terms of assembly, homotetramer; dimer of dimers.

It is found in the cytoplasm. It catalyses the reaction L-aspartate 4-semialdehyde + pyruvate = (2S,4S)-4-hydroxy-2,3,4,5-tetrahydrodipicolinate + H2O + H(+). It participates in amino-acid biosynthesis; L-lysine biosynthesis via DAP pathway; (S)-tetrahydrodipicolinate from L-aspartate: step 3/4. Catalyzes the condensation of (S)-aspartate-beta-semialdehyde [(S)-ASA] and pyruvate to 4-hydroxy-tetrahydrodipicolinate (HTPA). The chain is 4-hydroxy-tetrahydrodipicolinate synthase from Methanothrix thermoacetophila (strain DSM 6194 / JCM 14653 / NBRC 101360 / PT) (Methanosaeta thermophila).